Reading from the N-terminus, the 418-residue chain is Aspartate aminotransferase, cytoplasmic (418 aa).

At Ser-2 the chain carries N-acetylserine. Residues Gly-38, Trp-135, and Asn-188 each contribute to the L-aspartate site. Lys-255 is subject to N6-(pyridoxal phosphate)lysine. L-aspartate is bound at residue Arg-387. A Phosphoserine modification is found at Ser-389.

The protein belongs to the class-I pyridoxal-phosphate-dependent aminotransferase family. In terms of assembly, homodimer. Requires pyridoxal 5'-phosphate as cofactor.

It localises to the cytoplasm. The protein localises to the peroxisome. The catalysed reaction is L-aspartate + 2-oxoglutarate = oxaloacetate + L-glutamate. Its function is as follows. Plays a key role in amino acid metabolism. This Saccharomyces cerevisiae (strain ATCC 204508 / S288c) (Baker's yeast) protein is Aspartate aminotransferase, cytoplasmic (AAT2).